A 1054-amino-acid chain; its full sequence is FERM, ARHGEF and pleckstrin domain-containing protein 2 (1054 aa).

An FERM domain is found at 44–324; sequence LHLRVKLLDN…EYHTFFRLLD (281 aa). A phosphoserine mark is found at serine 389 and serine 439. A disordered region spans residues 421-527; sequence EFKDSSSSLT…GAGMDCEEPR (107 aa). Residues 468 to 492 show a composition bias toward low complexity; it reads PGPGLSTKSPQPSPSSRKSPLSLSP. In terms of domain architecture, DH spans 535-726; that stretch reads EAYFIVKEIL…TEVTTTLQHI (192 aa). One can recognise a PH 1 domain in the interval 755–852; it reads EFIREGCLHK…WMLDLNSAIQ (98 aa). The disordered stretch occupies residues 856 to 894; it reads SGGDTAPALPGRTVCTRPPRSPNEVSLEQESEDDARGVR. In terms of domain architecture, PH 2 spans 929 to 1026; the sequence is ENQLSGYLLR…WMEVIQGASS (98 aa). The tract at residues 1029 to 1054 is disordered; it reads GRAPSIVQDGPQPSSGLEGMVRGKEE.

Interacts with PLXNA1. Interaction with PLXNA1 or PIP5K1C lowers its guanine nucleotide exchange activity. Dissociates from PLXNA1 when SEMA3A binds to the receptor. Interacts with PIP5K1C via its FERM domain. The interaction with PIP5K1C is enhanced by SEMA3A binding. Interacts with RAC1.

Its function is as follows. Functions as a guanine nucleotide exchange factor that activates RAC1. May have relatively low activity. Plays a role in the response to class 3 semaphorins and remodeling of the actin cytoskeleton. Plays a role in TNFSF11-mediated osteoclast differentiation, especially in podosome rearrangement and reorganization of the actin cytoskeleton. Regulates the activation of ITGB3, integrin signaling and cell adhesion. This is FERM, ARHGEF and pleckstrin domain-containing protein 2 (FARP2) from Homo sapiens (Human).